The sequence spans 1056 residues: Isoleucine--tRNA ligase (1056 aa).

A 'HIGH' region motif is present at residues P56–H66. Positions K603–S607 match the 'KMSKS' region motif. An ATP-binding site is contributed by K606.

It belongs to the class-I aminoacyl-tRNA synthetase family. IleS type 2 subfamily. In terms of assembly, monomer. Zn(2+) serves as cofactor.

It localises to the cytoplasm. It carries out the reaction tRNA(Ile) + L-isoleucine + ATP = L-isoleucyl-tRNA(Ile) + AMP + diphosphate. Functionally, catalyzes the attachment of isoleucine to tRNA(Ile). As IleRS can inadvertently accommodate and process structurally similar amino acids such as valine, to avoid such errors it has two additional distinct tRNA(Ile)-dependent editing activities. One activity is designated as 'pretransfer' editing and involves the hydrolysis of activated Val-AMP. The other activity is designated 'posttransfer' editing and involves deacylation of mischarged Val-tRNA(Ile). The sequence is that of Isoleucine--tRNA ligase from Bdellovibrio bacteriovorus (strain ATCC 15356 / DSM 50701 / NCIMB 9529 / HD100).